The primary structure comprises 403 residues: Phosphopentomutase (403 aa).

Asp-13, Asp-298, His-303, Asp-339, His-340, and His-351 together coordinate Mn(2+).

It belongs to the phosphopentomutase family. The cofactor is Mn(2+).

It is found in the cytoplasm. The enzyme catalyses 2-deoxy-alpha-D-ribose 1-phosphate = 2-deoxy-D-ribose 5-phosphate. It catalyses the reaction alpha-D-ribose 1-phosphate = D-ribose 5-phosphate. Its pathway is carbohydrate degradation; 2-deoxy-D-ribose 1-phosphate degradation; D-glyceraldehyde 3-phosphate and acetaldehyde from 2-deoxy-alpha-D-ribose 1-phosphate: step 1/2. In terms of biological role, isomerase that catalyzes the conversion of deoxy-ribose 1-phosphate (dRib-1-P) and ribose 1-phosphate (Rib-1-P) to deoxy-ribose 5-phosphate (dRib-5-P) and ribose 5-phosphate (Rib-5-P), respectively. The chain is Phosphopentomutase from Streptococcus pneumoniae serotype 4 (strain ATCC BAA-334 / TIGR4).